The chain runs to 90 residues: Translation initiation factor IF-1 (90 aa).

An S1-like domain is found at 7–76; the sequence is KEDVIRMEGT…TRGRIVYRKK (70 aa).

The protein belongs to the IF-1 family. In terms of assembly, component of the 30S ribosomal translation pre-initiation complex which assembles on the 30S ribosome in the order IF-2 and IF-3, IF-1 and N-formylmethionyl-tRNA(fMet); mRNA recruitment can occur at any time during PIC assembly.

Its subcellular location is the cytoplasm. Functionally, one of the essential components for the initiation of protein synthesis. Stabilizes the binding of IF-2 and IF-3 on the 30S subunit to which N-formylmethionyl-tRNA(fMet) subsequently binds. Helps modulate mRNA selection, yielding the 30S pre-initiation complex (PIC). Upon addition of the 50S ribosomal subunit IF-1, IF-2 and IF-3 are released leaving the mature 70S translation initiation complex. The protein is Translation initiation factor IF-1 of Fervidobacterium nodosum (strain ATCC 35602 / DSM 5306 / Rt17-B1).